The primary structure comprises 700 residues: Elongation factor G (700 aa).

The tr-type G domain occupies Glu8–Thr290. GTP is bound by residues Ala17–Thr24, Asp88–His92, and Asn142–Asp145.

Belongs to the TRAFAC class translation factor GTPase superfamily. Classic translation factor GTPase family. EF-G/EF-2 subfamily.

Its subcellular location is the cytoplasm. Its function is as follows. Catalyzes the GTP-dependent ribosomal translocation step during translation elongation. During this step, the ribosome changes from the pre-translocational (PRE) to the post-translocational (POST) state as the newly formed A-site-bound peptidyl-tRNA and P-site-bound deacylated tRNA move to the P and E sites, respectively. Catalyzes the coordinated movement of the two tRNA molecules, the mRNA and conformational changes in the ribosome. The protein is Elongation factor G of Glaesserella parasuis serovar 5 (strain SH0165) (Haemophilus parasuis).